The following is a 246-amino-acid chain: Ribulose-phosphate 3-epimerase (246 aa).

S9 serves as a coordination point for substrate. Residues H34, D36, and H83 each contribute to the a divalent metal cation site. The Proton acceptor role is filled by D36. Residues H83, G159–G162, D188–G190, and G210–S212 contribute to the substrate site. D188 serves as a coordination point for a divalent metal cation. The active-site Proton donor is the D188.

It belongs to the ribulose-phosphate 3-epimerase family. Co(2+) serves as cofactor. Requires Fe(2+) as cofactor. The cofactor is Mn(2+). It depends on Zn(2+) as a cofactor.

The catalysed reaction is D-ribulose 5-phosphate = D-xylulose 5-phosphate. It functions in the pathway carbohydrate degradation; pentose phosphate pathway; D-xylulose 5-phosphate from D-ribulose 5-phosphate (non-oxidative stage): step 1/1. Catalyzes the reversible epimerization of D-ribulose 5-phosphate to D-xylulose 5-phosphate. This chain is Ribulose-phosphate 3-epimerase (RPE1), found in Candida glabrata (strain ATCC 2001 / BCRC 20586 / JCM 3761 / NBRC 0622 / NRRL Y-65 / CBS 138) (Yeast).